A 169-amino-acid chain; its full sequence is Putative phosphoesterase SH1944 (169 aa).

H34 serves as the catalytic Proton donor. Short sequence motifs (HXTX) lie at residues 34 to 37 and 115 to 118; these read HITI and HFTI. Catalysis depends on H115, which acts as the Proton acceptor.

The protein belongs to the 2H phosphoesterase superfamily. YjcG family.

The chain is Putative phosphoesterase SH1944 from Staphylococcus haemolyticus (strain JCSC1435).